Reading from the N-terminus, the 162-residue chain is 2-C-methyl-D-erythritol 2,4-cyclodiphosphate synthase (162 aa).

Residues D8 and H10 each contribute to the a divalent metal cation site. Residues 8–10 (DVH) and 34–35 (HS) each bind 4-CDP-2-C-methyl-D-erythritol 2-phosphate. A divalent metal cation is bound at residue H42. 4-CDP-2-C-methyl-D-erythritol 2-phosphate-binding positions include 56-58 (DIG), 61-65 (FPDND), 132-135 (TTTE), F139, and K142.

The protein belongs to the IspF family. As to quaternary structure, homotrimer. A divalent metal cation is required as a cofactor.

The catalysed reaction is 4-CDP-2-C-methyl-D-erythritol 2-phosphate = 2-C-methyl-D-erythritol 2,4-cyclic diphosphate + CMP. Its pathway is isoprenoid biosynthesis; isopentenyl diphosphate biosynthesis via DXP pathway; isopentenyl diphosphate from 1-deoxy-D-xylulose 5-phosphate: step 4/6. Involved in the biosynthesis of isopentenyl diphosphate (IPP) and dimethylallyl diphosphate (DMAPP), two major building blocks of isoprenoid compounds. Catalyzes the conversion of 4-diphosphocytidyl-2-C-methyl-D-erythritol 2-phosphate (CDP-ME2P) to 2-C-methyl-D-erythritol 2,4-cyclodiphosphate (ME-CPP) with a corresponding release of cytidine 5-monophosphate (CMP). In Pelotomaculum thermopropionicum (strain DSM 13744 / JCM 10971 / SI), this protein is 2-C-methyl-D-erythritol 2,4-cyclodiphosphate synthase.